Here is a 525-residue protein sequence, read N- to C-terminus: Protein translocase subunit SecD (525 aa).

The next 6 helical transmembrane spans lie at 9–29, 368–388, 392–412, 415–435, 460–480, and 487–507; these read LYLV…SLLG, VLIG…GFGM, LAVV…QATL, PGIA…VLIF, FSTI…LYQF, and GFAV…IFVT.

This sequence belongs to the SecD/SecF family. SecD subfamily. Forms a complex with SecF. Part of the essential Sec protein translocation apparatus which comprises SecA, SecYEG and auxiliary proteins SecDF-YajC and YidC.

The protein resides in the cell inner membrane. Functionally, part of the Sec protein translocase complex. Interacts with the SecYEG preprotein conducting channel. SecDF uses the proton motive force (PMF) to complete protein translocation after the ATP-dependent function of SecA. This Magnetococcus marinus (strain ATCC BAA-1437 / JCM 17883 / MC-1) protein is Protein translocase subunit SecD.